The chain runs to 1187 residues: DNA-directed RNA polymerase subunit beta (1187 aa).

A disordered region spans residues 1150–1187 (KDEDDDPASSADDLGFNIGARPDAAAKEDQKAEEPEYQ). The span at 1173–1187 (AAAKEDQKAEEPEYQ) shows a compositional bias: basic and acidic residues.

This sequence belongs to the RNA polymerase beta chain family. The RNAP catalytic core consists of 2 alpha, 1 beta, 1 beta' and 1 omega subunit. When a sigma factor is associated with the core the holoenzyme is formed, which can initiate transcription.

It catalyses the reaction RNA(n) + a ribonucleoside 5'-triphosphate = RNA(n+1) + diphosphate. DNA-dependent RNA polymerase catalyzes the transcription of DNA into RNA using the four ribonucleoside triphosphates as substrates. The sequence is that of DNA-directed RNA polymerase subunit beta from Bifidobacterium longum (strain DJO10A).